The following is an 881-amino-acid chain: Valine--tRNA ligase (881 aa).

A 'HIGH' region motif is present at residues 48-58; sequence PNITGKLHLGH. The 'KMSKS' region signature appears at 527–531; it reads KMSKS. Lys530 contacts ATP. Coiled coils occupy residues 721–747 and 811–881; these read KNETSENAMNQIIEAIKSIRNVRAEMN and LLDL…AALK.

This sequence belongs to the class-I aminoacyl-tRNA synthetase family. ValS type 1 subfamily. Monomer.

It localises to the cytoplasm. It catalyses the reaction tRNA(Val) + L-valine + ATP = L-valyl-tRNA(Val) + AMP + diphosphate. Catalyzes the attachment of valine to tRNA(Val). As ValRS can inadvertently accommodate and process structurally similar amino acids such as threonine, to avoid such errors, it has a 'posttransfer' editing activity that hydrolyzes mischarged Thr-tRNA(Val) in a tRNA-dependent manner. The protein is Valine--tRNA ligase of Clostridium acetobutylicum (strain ATCC 824 / DSM 792 / JCM 1419 / IAM 19013 / LMG 5710 / NBRC 13948 / NRRL B-527 / VKM B-1787 / 2291 / W).